We begin with the raw amino-acid sequence, 420 residues long: MSTFKAPKGTYDLIPPDSAKYLAVREAIAAPLRNSGYGYIETPGFENVELFARGVGESTDIVTKEMYAFETKGGDRLALRPEGTASVLRAALEANLHKAGNLPVKLWYSGSYYRYERPQKGRYRHFSQVGAEAIGAEDPALDAELIILADQSYRSLGLRNFRILLNSLGDKECRPVYRAALQDFLRGLDLDEDTLRRAEINPLRVLDDKREDVQKQLGGAPLLRDYLCDACKAYHEEVRELITAAGVSFEDDAKLVRGLDYYTRTTFEFVHDGLGSQSAVGGGGRYDGLSEMIGGPALPSVGWALGVDRTVLALEAEGVELELPSSTSVFAVPLGEEARRILFAKVTELRKVGIAADFAYGGKGLKGAMKNANRSGARYTVVAGERDLAEGVVQLKDMESGEQTAVGVNEIVAELEARLG.

It belongs to the class-II aminoacyl-tRNA synthetase family. In terms of assembly, homodimer.

It is found in the cytoplasm. It catalyses the reaction tRNA(His) + L-histidine + ATP = L-histidyl-tRNA(His) + AMP + diphosphate + H(+). This is Histidine--tRNA ligase from Streptomyces avermitilis (strain ATCC 31267 / DSM 46492 / JCM 5070 / NBRC 14893 / NCIMB 12804 / NRRL 8165 / MA-4680).